The chain runs to 510 residues: MEEIQRYLQPDRSQQHNFLYPLIFQEYIYALAHDHGLNINRSILLENPGYNNQLSLLIVKRLITRMYPQNHFFICTNDSNQNPFLGCNKSLYSQMISEGFAFILEIPFSLQLISSSSLSLEGKNVFKSHNLRSIHSTFPFLEDNFSHLNYVLDILIPYPVHLEILXQTLRYWVKDASSLHLLRFFLHEYWNLNSLITPKKPGYSFSKKKKRFFFFLYNSYVYECESTFVFLRNQSYHLRSTSFGALLERIYFYGKIECLVEVFAKDFQXTLWLFKDPXMHYVRYQGKSILASKGTFLLMNKWKFYLVNFWQCHFSXCFETGRIHINQLSNHSRDFLGYLSSVRLNPSMVRSQILENSFLINNAIKKFDTLVPIIPLIGSLAKANFCTVLGHPISKPVWSDLSDSDIIDRFGRICRKLFHYYSGSSKKKTLYRIKYILRLSCGRTLARKHKSTVRAFLKRSGSELLEEFLTSEEQVLSLTFRRASSSLWGVYRNRIWYLDIFSINDLANYQ.

It belongs to the intron maturase 2 family. MatK subfamily.

The protein localises to the plastid. Its subcellular location is the chloroplast. Functionally, usually encoded in the trnK tRNA gene intron. Probably assists in splicing its own and other chloroplast group II introns. The polypeptide is Maturase K (Cestrum elegans (Red cestrum)).